The following is a 123-amino-acid chain: Small ribosomal subunit protein uS12 (123 aa).

A 3-methylthioaspartic acid modification is found at D89.

This sequence belongs to the universal ribosomal protein uS12 family. As to quaternary structure, part of the 30S ribosomal subunit. Contacts proteins S8 and S17. May interact with IF1 in the 30S initiation complex.

Its function is as follows. With S4 and S5 plays an important role in translational accuracy. Functionally, interacts with and stabilizes bases of the 16S rRNA that are involved in tRNA selection in the A site and with the mRNA backbone. Located at the interface of the 30S and 50S subunits, it traverses the body of the 30S subunit contacting proteins on the other side and probably holding the rRNA structure together. The combined cluster of proteins S8, S12 and S17 appears to hold together the shoulder and platform of the 30S subunit. This chain is Small ribosomal subunit protein uS12, found in Orientia tsutsugamushi (strain Ikeda) (Rickettsia tsutsugamushi).